The primary structure comprises 300 residues: Tyrosine recombinase XerD (300 aa).

Residues 5–90 enclose the Core-binding (CB) domain; it reads YQCDPLIDAF…SLRRFYNYLL (86 aa). One can recognise a Tyr recombinase domain in the interval 111–294; sequence HLPDSLSESQ…ARARLQELHQ (184 aa). Residues Arg151, Lys175, His246, Arg249, and His272 contribute to the active site. Tyr281 (O-(3'-phospho-DNA)-tyrosine intermediate) is an active-site residue.

The protein belongs to the 'phage' integrase family. XerD subfamily. In terms of assembly, forms a cyclic heterotetrameric complex composed of two molecules of XerC and two molecules of XerD.

The protein localises to the cytoplasm. Site-specific tyrosine recombinase, which acts by catalyzing the cutting and rejoining of the recombining DNA molecules. The XerC-XerD complex is essential to convert dimers of the bacterial chromosome into monomers to permit their segregation at cell division. It also contributes to the segregational stability of plasmids. The polypeptide is Tyrosine recombinase XerD (Shewanella oneidensis (strain ATCC 700550 / JCM 31522 / CIP 106686 / LMG 19005 / NCIMB 14063 / MR-1)).